The following is a 245-amino-acid chain: uncharacterized protein (245 aa).

A run of 6 helical transmembrane segments spans residues 38–58 (IYPAFITVMALVSFIASAIFI), 68–88 (TIELAIAFLSNFYLGLTQGYF), 100–120 (IWSLAVEGQYYLIFPLILILA), 129–149 (VLFIITLILFFILLATSFVSA), 194–214 (VNNILAILSTLLLFSCLFLMN), and 217–237 (IAFIPGITLILPCIFTALIIH).

Belongs to the acyltransferase 3 family.

It localises to the cell membrane. This is an uncharacterized protein from Haemophilus influenzae (strain ATCC 51907 / DSM 11121 / KW20 / Rd).